A 141-amino-acid polypeptide reads, in one-letter code: VLSAADKSNVKAAWGKVGGNAPAYGAEALERMFLSFPTTKTYFPHFDLSHGSAQVKAHGEKVANALTKAVGHLDDLPGTLSDLSDLHAHKLRVDPVNFKLLSHTLLVTLASHLPSDFTPAVHASLDKFLANVSTVLTSKYR.

Residues 1–141 (VLSAADKSNV…VSTVLTSKYR (141 aa)) form the Globin domain. Phosphoserine is present on S3. 2 positions are modified to N6-succinyllysine: K7 and K11. K16 is modified (N6-acetyllysine; alternate). K16 bears the N6-succinyllysine; alternate mark. At Y24 the chain carries Phosphotyrosine. The residue at position 35 (S35) is a Phosphoserine. K40 carries the N6-succinyllysine modification. At S49 the chain carries Phosphoserine. H58 provides a ligand contact to O2. Residue H87 coordinates heme b. S102 is modified (phosphoserine). T108 carries the phosphothreonine modification. At S124 the chain carries Phosphoserine. 2 positions are modified to phosphothreonine: T134 and T137. Residue S138 is modified to Phosphoserine.

The protein belongs to the globin family. As to quaternary structure, heterotetramer of two alpha chains and two beta chains. In terms of tissue distribution, red blood cells.

Functionally, involved in oxygen transport from the lung to the various peripheral tissues. In terms of biological role, hemopressin acts as an antagonist peptide of the cannabinoid receptor CNR1. Hemopressin-binding efficiently blocks cannabinoid receptor CNR1 and subsequent signaling. This chain is Hemoglobin subunit alpha (HBA), found in Rangifer tarandus (Reindeer).